The sequence spans 760 residues: MKGTPFRSPHLYQEGSSCMHRTIRSVAAVLTVVLSATIPMVPAWSDGEPRSIQFWWPDHLDLSPLRQHAAESDPLGANFNYIKAFQTLDLGAVKKDIAVLLKTPQDWWPADYGNYGPFFIRMAWHGAGTYRTYDGRGGASGAQQRFEPLNSWPDNANLDKARRLLWPIKKKYGEKLSWGDLMVLTGNVALETMGFKTYGFAGGRTDDWEPDLIYWGSGAKFMSNNRDKNGKLEKPLAATQMGLIYVNPEGPNGVPDPVAAARDIREAFGGMAMDDEETVALIAGGHTFGKAHGAASPSKCVGPAPAAAGIEEQGLGWKNKCGTGKGPDAITSGLEGAWSADPVNFTSQYLDNLFGFDWVLTKSPGGAVQWKPKDASADQLVPDAFDASKRHPPMMFTTDIALKTDPSYRKIALSFQKDPEKFKAAFARAWFKLVHRDMGPRSRYFGPEVPKEDLLWQDPLPAITYKAVDEADITDLKQKILASGLTVPELVRTAWGSAASFRGTDKRGGANGARIRLAPEKDWPVNDPQELKKVLDKLESIQTAFNDGNHDGKKISLADLIVLGGNVGVEEAAKKAGYPVTVPFAPGRVDAVQAQTDVKSFAVLEPTADGFRNYYASSNQLSPAEMLVTRASMLNLTVPEMTVLVGGMRVLDANEGHSQLGVLTDHPGVLSNDFFVNLLDMSTKWSKAADTAGVYEGHDRKTDALRWKGSTVDLIFGSNSELRAVAEVYASDDAKEKFVRDFVAAWNKVMTLDRFDLQRQ.

A signal peptide spans 1 to 45 (MKGTPFRSPHLYQEGSSCMHRTIRSVAAVLTVVLSATIPMVPAWS). The tryptophyl-tyrosyl-methioninium (Trp-Tyr) (with M-271) cross-link spans 124–245 (WHGAGTYRTY…LAATQMGLIY (122 aa)). Residue His-125 is the Proton acceptor of the active site. The segment at residues 245–271 (YVNPEGPNGVPDPVAAARDIREAFGGM) is a cross-link (tryptophyl-tyrosyl-methioninium (Tyr-Met) (with W-124)). His-286 is a heme b binding site.

The protein belongs to the peroxidase family. Peroxidase/catalase subfamily. As to quaternary structure, homodimer or homotetramer. It depends on heme b as a cofactor. In terms of processing, formation of the three residue Trp-Tyr-Met cross-link is important for the catalase, but not the peroxidase activity of the enzyme.

The enzyme catalyses H2O2 + AH2 = A + 2 H2O. The catalysed reaction is 2 H2O2 = O2 + 2 H2O. In terms of biological role, bifunctional enzyme with both catalase and broad-spectrum peroxidase activity. The sequence is that of Catalase-peroxidase from Granulibacter bethesdensis (strain ATCC BAA-1260 / CGDNIH1).